The primary structure comprises 346 residues: Large ribosomal subunit protein uL3 (346 aa).

The tract at residues 324 to 346 (KPPKKKPPVERPQITYVSRESKQ) is disordered.

This sequence belongs to the universal ribosomal protein uL3 family. As to quaternary structure, part of the 50S ribosomal subunit. Forms a cluster with proteins L14 and L24e.

One of the primary rRNA binding proteins, it binds directly near the 3'-end of the 23S rRNA, where it nucleates assembly of the 50S subunit. This is Large ribosomal subunit protein uL3 from Thermococcus gammatolerans (strain DSM 15229 / JCM 11827 / EJ3).